A 164-amino-acid polypeptide reads, in one-letter code: Large ribosomal subunit protein uL11 (164 aa).

This sequence belongs to the universal ribosomal protein uL11 family. Part of the ribosomal stalk of the 50S ribosomal subunit. Interacts with L10 and the large rRNA to form the base of the stalk. L10 forms an elongated spine to which L12 dimers bind in a sequential fashion forming a multimeric L10(L12)X complex.

Functionally, forms part of the ribosomal stalk which helps the ribosome interact with GTP-bound translation factors. This Pyrococcus furiosus (strain ATCC 43587 / DSM 3638 / JCM 8422 / Vc1) protein is Large ribosomal subunit protein uL11.